The primary structure comprises 76 residues: Small ribosomal subunit protein bS18 (76 aa).

Belongs to the bacterial ribosomal protein bS18 family. As to quaternary structure, part of the 30S ribosomal subunit. Forms a tight heterodimer with protein bS6.

Functionally, binds as a heterodimer with protein bS6 to the central domain of the 16S rRNA, where it helps stabilize the platform of the 30S subunit. The sequence is that of Small ribosomal subunit protein bS18 from Xylella fastidiosa (strain 9a5c).